Reading from the N-terminus, the 350-residue chain is 3-dehydroquinate synthase (350 aa).

Residues G106–D110, T130–S131, K143, and K152 each bind NAD(+). Zn(2+)-binding residues include E185, H246, and H263.

This sequence belongs to the sugar phosphate cyclases superfamily. Dehydroquinate synthase family. Requires Co(2+) as cofactor. Zn(2+) serves as cofactor. It depends on NAD(+) as a cofactor.

It localises to the cytoplasm. It carries out the reaction 7-phospho-2-dehydro-3-deoxy-D-arabino-heptonate = 3-dehydroquinate + phosphate. The protein operates within metabolic intermediate biosynthesis; chorismate biosynthesis; chorismate from D-erythrose 4-phosphate and phosphoenolpyruvate: step 2/7. Its function is as follows. Catalyzes the conversion of 3-deoxy-D-arabino-heptulosonate 7-phosphate (DAHP) to dehydroquinate (DHQ). This chain is 3-dehydroquinate synthase, found in Clostridium perfringens (strain SM101 / Type A).